A 383-amino-acid polypeptide reads, in one-letter code: MQAVGLITEYNPLHNGHRYHLRQAQQLTNADCVIVVMSGDWLQRGEPAILDKWTRAKLALENGADLVIELPVFFATQPAHLFARGGIELLSALDCTSVVFGAEHPELDFQRLATAIAARQGSFTHYNATFATQFNAALQAATGVTLTAANDMLSFCYYAANQTLAHPMQLLPIKRRQADHATTTIAADSRYASGTAVRQAALAQDWAALKPVVPADTFTALTTQRLQRWSDFWPFLQYQLLTVDVARSGQYDQMAEGLEYRMQAMAQHATTFDDFIHQVKSKRYTYTRLQRVATAALLQLTQAEVQKAQAHNYLRVLGFTPKGQAYLHQVKKQLPLPLYTKINQDLRQHALNLDYRAGRVYQLINGQSQDLYRQPWRLPVTIG.

ATP-binding positions include 7–20, G101, N150, and R175; that span reads ITEY…HRYH.

The protein belongs to the TmcAL family.

It is found in the cytoplasm. The enzyme catalyses cytidine(34) in elongator tRNA(Met) + acetate + ATP = N(4)-acetylcytidine(34) in elongator tRNA(Met) + AMP + diphosphate. In terms of biological role, catalyzes the formation of N(4)-acetylcytidine (ac(4)C) at the wobble position of elongator tRNA(Met), using acetate and ATP as substrates. First activates an acetate ion to form acetyladenylate (Ac-AMP) and then transfers the acetyl group to tRNA to form ac(4)C34. The polypeptide is tRNA(Met) cytidine acetate ligase (Lactiplantibacillus plantarum (strain ATCC BAA-793 / NCIMB 8826 / WCFS1) (Lactobacillus plantarum)).